The sequence spans 331 residues: Rho GTPase-activating protein 5 (331 aa).

Residues 3-16 form the CRIB domain; that stretch reads IGGPTNIRHVAHVT. The 178-residue stretch at 48–225 folds into the Rho-GAP domain; sequence VSTESMQLSY…LLKSLTEKTV (178 aa). Positions 227-251 are enriched in basic and acidic residues; it reads EREASSSVVDRRCSKEAEDGEKEKD. Residues 227-331 are disordered; it reads EREASSSVVD…VQPPICSSNP (105 aa). A compositionally biased stretch (acidic residues) spans 252-277; it reads NEEEEEDEEEEEEEEDEDEDEEEEGD.

In terms of tissue distribution, expressed in differentiating xylem cells.

Its subcellular location is the cell membrane. Its function is as follows. Acts as a GTPase activator for the Rac-type GTPase by converting it to an inactive GDP-bound state. This is Rho GTPase-activating protein 5 (ROPGAP5) from Arabidopsis thaliana (Mouse-ear cress).